We begin with the raw amino-acid sequence, 248 residues long: Meiotically up-regulated gene 65 protein (248 aa).

Its function is as follows. Has a role in meiosis. The protein is Meiotically up-regulated gene 65 protein (mug65) of Schizosaccharomyces pombe (strain 972 / ATCC 24843) (Fission yeast).